A 77-amino-acid polypeptide reads, in one-letter code: NADH-ubiquinone oxidoreductase chain 4L (77 aa).

The next 2 membrane-spanning stretches (helical) occupy residues 15 to 37 (WQRL…LKFS) and 44 to 64 (MFFY…VVMV).

This sequence belongs to the complex I subunit 4L family.

It is found in the mitochondrion membrane. The catalysed reaction is a ubiquinone + NADH + 5 H(+)(in) = a ubiquinol + NAD(+) + 4 H(+)(out). In terms of biological role, core subunit of the mitochondrial membrane respiratory chain NADH dehydrogenase (Complex I) that is believed to belong to the minimal assembly required for catalysis. Complex I functions in the transfer of electrons from NADH to the respiratory chain. The immediate electron acceptor for the enzyme is believed to be ubiquinone. In Caenorhabditis elegans, this protein is NADH-ubiquinone oxidoreductase chain 4L.